We begin with the raw amino-acid sequence, 396 residues long: Elongation factor Tu (396 aa).

Residues Lys-10–Glu-205 enclose the tr-type G domain. The interval Gly-19 to Thr-26 is G1. Residue Gly-19–Thr-26 coordinates GTP. Residue Thr-26 participates in Mg(2+) binding. Residues Gly-61–Ser-65 are G2. The interval Asp-82–Gly-85 is G3. Residues Asp-82–His-86 and Asn-137–Asp-140 each bind GTP. The G4 stretch occupies residues Asn-137–Asp-140. The tract at residues Ser-175–Leu-177 is G5. Position 385 is a phosphothreonine (Thr-385).

It belongs to the TRAFAC class translation factor GTPase superfamily. Classic translation factor GTPase family. EF-Tu/EF-1A subfamily. Monomer. Interacts with BrxC. Post-translationally, phosphorylated on Thr-385 in vitro by PrkC in the presence of poly-L-lysine or myelin basic protein, dephosphorylated by PrpC.

The protein resides in the cytoplasm. The catalysed reaction is GTP + H2O = GDP + phosphate + H(+). In terms of biological role, GTP hydrolase that promotes the GTP-dependent binding of aminoacyl-tRNA to the A-site of ribosomes during protein biosynthesis. This is Elongation factor Tu from Bacillus subtilis (strain 168).